Consider the following 276-residue polypeptide: Acyl-[acyl-carrier-protein]--UDP-N-acetylglucosamine O-acyltransferase (276 aa).

It belongs to the transferase hexapeptide repeat family. LpxA subfamily. As to quaternary structure, homotrimer.

It localises to the cytoplasm. It carries out the reaction a (3R)-hydroxyacyl-[ACP] + UDP-N-acetyl-alpha-D-glucosamine = a UDP-3-O-[(3R)-3-hydroxyacyl]-N-acetyl-alpha-D-glucosamine + holo-[ACP]. The protein operates within glycolipid biosynthesis; lipid IV(A) biosynthesis; lipid IV(A) from (3R)-3-hydroxytetradecanoyl-[acyl-carrier-protein] and UDP-N-acetyl-alpha-D-glucosamine: step 1/6. Involved in the biosynthesis of lipid A, a phosphorylated glycolipid that anchors the lipopolysaccharide to the outer membrane of the cell. The polypeptide is Acyl-[acyl-carrier-protein]--UDP-N-acetylglucosamine O-acyltransferase (Synechocystis sp. (strain ATCC 27184 / PCC 6803 / Kazusa)).